The following is a 191-amino-acid chain: uncharacterized protein (191 aa).

This sequence to E.coli YecM.

This is an uncharacterized protein from Haemophilus influenzae (strain ATCC 51907 / DSM 11121 / KW20 / Rd).